Consider the following 196-residue polypeptide: ATP-dependent Clp protease proteolytic subunit (196 aa).

S96 serves as the catalytic Nucleophile. Residue H121 is part of the active site.

Belongs to the peptidase S14 family. As to quaternary structure, fourteen ClpP subunits assemble into 2 heptameric rings which stack back to back to give a disk-like structure with a central cavity, resembling the structure of eukaryotic proteasomes.

It is found in the cytoplasm. The enzyme catalyses Hydrolysis of proteins to small peptides in the presence of ATP and magnesium. alpha-casein is the usual test substrate. In the absence of ATP, only oligopeptides shorter than five residues are hydrolyzed (such as succinyl-Leu-Tyr-|-NHMec, and Leu-Tyr-Leu-|-Tyr-Trp, in which cleavage of the -Tyr-|-Leu- and -Tyr-|-Trp bonds also occurs).. Functionally, cleaves peptides in various proteins in a process that requires ATP hydrolysis. Has a chymotrypsin-like activity. Plays a major role in the degradation of misfolded proteins. In Streptococcus agalactiae serotype III (strain NEM316), this protein is ATP-dependent Clp protease proteolytic subunit.